We begin with the raw amino-acid sequence, 394 residues long: 1-deoxy-D-xylulose 5-phosphate reductoisomerase (394 aa).

7 residues coordinate NADPH: T12, G13, S14, I15, G38, N41, and N132. K133 is a binding site for 1-deoxy-D-xylulose 5-phosphate. Residue E134 participates in NADPH binding. D156 serves as a coordination point for Mn(2+). Positions 157, 158, 182, and 205 each coordinate 1-deoxy-D-xylulose 5-phosphate. Position 158 (E158) interacts with Mn(2+). G211 provides a ligand contact to NADPH. Residues S218, N223, K224, and E227 each contribute to the 1-deoxy-D-xylulose 5-phosphate site. E227 is a Mn(2+) binding site.

Belongs to the DXR family. It depends on Mg(2+) as a cofactor. The cofactor is Mn(2+).

The catalysed reaction is 2-C-methyl-D-erythritol 4-phosphate + NADP(+) = 1-deoxy-D-xylulose 5-phosphate + NADPH + H(+). The protein operates within isoprenoid biosynthesis; isopentenyl diphosphate biosynthesis via DXP pathway; isopentenyl diphosphate from 1-deoxy-D-xylulose 5-phosphate: step 1/6. Its function is as follows. Catalyzes the NADPH-dependent rearrangement and reduction of 1-deoxy-D-xylulose-5-phosphate (DXP) to 2-C-methyl-D-erythritol 4-phosphate (MEP). The protein is 1-deoxy-D-xylulose 5-phosphate reductoisomerase of Pseudarthrobacter chlorophenolicus (strain ATCC 700700 / DSM 12829 / CIP 107037 / JCM 12360 / KCTC 9906 / NCIMB 13794 / A6) (Arthrobacter chlorophenolicus).